Here is a 477-residue protein sequence, read N- to C-terminus: UDP-N-acetylmuramate--L-alanine ligase (477 aa).

Position 117–123 (117–123 (GTHGKTT)) interacts with ATP.

This sequence belongs to the MurCDEF family.

It is found in the cytoplasm. It catalyses the reaction UDP-N-acetyl-alpha-D-muramate + L-alanine + ATP = UDP-N-acetyl-alpha-D-muramoyl-L-alanine + ADP + phosphate + H(+). Its pathway is cell wall biogenesis; peptidoglycan biosynthesis. In terms of biological role, cell wall formation. In Phenylobacterium zucineum (strain HLK1), this protein is UDP-N-acetylmuramate--L-alanine ligase.